We begin with the raw amino-acid sequence, 275 residues long: MIPNHILILGSPNSGKLRIANLISRNEEIPQLEDAESHSGLIIKTSLRTKYYFLKLNILIDEYLESKETPDESKLSELHKWYQEFKSEEFGELREVLDGLMFTINMKTDSISFIGEALEIIEQIKLSLGDEESFHNWGGFIAVVGSCPVNQVVEDDVVLEIEDMVLSHGLEFINLSTEGENEYKEKQGKDRIVELVESHDWTNLEMVKVDSKQYEANKLAKIESMKHKLINEKEELDLDDIFKKLNLARDHASSLTQNEKDKYANKIIDEIIDFL.

The protein belongs to the IRC6 family.

Involved in gross chromosomal rearrangements (GCRs) and telomere healing. This Candida dubliniensis (strain CD36 / ATCC MYA-646 / CBS 7987 / NCPF 3949 / NRRL Y-17841) (Yeast) protein is Increased recombination centers protein 6 (IRC6).